We begin with the raw amino-acid sequence, 769 residues long: MDREEPAESECTLRALVEEYNGACKEAPKEMSKQFTDYNTFKRYTTSKKDHAPQMRLVYSVRKPWPISMTPSKEIPLVFNGTKLKDTILDLGESKRTRANIVVPDYWSKYGSQTSLEVVNAILYAEDLKVQRFFSTEWGEIRYGRMLPFRKPVQACPTIEEVNPASIPHTLLQVFCPQYTTLDSKRKAHMGAVEKLKRVMEPICKVQTQESAVHIARSLIDSNKKWLPTVVDHTPRTAEMAHFLCSKYHYVHTNTQDLSDTRSIDNLCGELVKRSLKCRCPKETLVANLDKITIQGRPMREVLADHDGELPYLGICRVAMGLSTHHTMKIRSTKFSILNSDHPRIEVKKVFSLSPDVQVTIPYRRFKGKAKVYFQNDQIQGYFSCTDRQIDEIKISAPKNAPLLEPLLDICYYGSFIEPGFEQTFGFYPAGKREFVDSFFMHHSKDHKAFLIHMGLDKDLSLPLSPELNWKEPALSKVCRVTELDSTVQPYTSATREFVLGETLNVYTQHENGLELLICPTEIRSTRGPLPPGTNLSGSEFIDIYQDPFSRAKSLLKSTILHAERCKEFVGNMLEEYQDPAETTVQSLVPINTWGKSAKRKLQEEITSDPDWHQCPRKRAKMSYLAIIAGSIQDRDKKQTNVPRAFMLRGSQIEYDMKATRGLVVDTTNRIIVGGETVLREGKGGPEGYVQTGVFEEQPRCYLVDTPDHGLSMGLSRFCVHSQGRYFQYEKKISIWEETDNIKATIDSQRDLKRRRDIEEMVSKRARIV.

Residues 753–756 (KRRR) carry the Nuclear localization signal motif.

The protein belongs to the influenza viruses PB2 family. As to quaternary structure, RNA polymerase is composed of three subunits: PA, PB1 and PB2.

Its subcellular location is the virion. It localises to the host nucleus. In terms of biological role, subunit of the RNA-dependent RNA polymerase which is responsible for replication and transcription of virus RNA segments. The transcription of viral mRNAs occurs by a unique mechanism called cap-snatching. 5' methylated caps of cellular mRNAs are cleaved after 10-13 nucleotides by PA. In turn, these short capped RNAs are used as primers by PB1 for transcription of viral mRNAs. During virus replication, PB1 initiates RNA synthesis and copy vRNA into complementary RNA (cRNA) which in turn serves as a template for the production of more vRNAs. This Amblyomma variegatum (Tropical bont tick) protein is Polymerase basic protein 2.